Here is a 622-residue protein sequence, read N- to C-terminus: Peptidoglycan O-acetyltransferase OatA (622 aa).

11 consecutive transmembrane segments (helical) span residues 11 to 31 (YVPSIDGLRALAVIAVIAYHL), 39 to 59 (GFIGVDIFFVLSGYLITNILL), 81 to 101 (LIPAVYVMIVVVVIYSVFFHP), 143 to 163 (LWSLAIEEQFYLIWPAFLLVF), 173 to 193 (LLKIVIGLGLLSAVWMTILYV), 212 to 232 (LLSGCALAFVWPFNRLSPVVP), 237 to 257 (AVLNIAGTISILCFILFTAFV), 267 to 287 (GGLLFVAILGVIMIATISHPA), 307 to 327 (YGIYLWHYPIITLTTPVLEIT), 334 to 354 (AILQVAATFIIAELSFRFIET), and 387 to 407 (IAGVVAVLAIFTLGMSNVLSV). A disordered region spans residues 412–467 (EKQQTSVKTTTSTPDEKKDDKKEDKATKDKEADSNKASEQKETQKPDNKNKSAATP). Over residues 413-424 (KQQTSVKTTTST) the composition is skewed to low complexity. Positions 425 to 461 (PDEKKDDKKEDKATKDKEADSNKASEQKETQKPDNKN) are enriched in basic and acidic residues. Residues serine 480, aspartate 600, and histidine 603 contribute to the active site.

Belongs to the acyltransferase 3 family.

The protein localises to the cell membrane. It is found in the secreted. Its subcellular location is the cell wall. Its function is as follows. Responsible for O-acetylation at the C6-hydroxyl group of N-acetylmuramyl residues, forming the corresponding N,6-O-diacetylmuramic acid of the peptidoglycan. O-acetylation of the peptidoglycan is the major determinant for lysozyme resistance. Critical for virulence and escape from innate immune response of the host. Involved at both early and later stages of listeriosis in the mouse model of infection. Required for successful host colonization and for intracellular survival of bacteria in macrophages of the infected host. Controls the production of inflammatory mediators in the liver of the infected host. Confers resistance to host antimicrobial molecules and to cell wall-targeting molecules such as beta-lactam antibiotics and bacteriocins. This is Peptidoglycan O-acetyltransferase OatA from Listeria monocytogenes serovar 1/2a (strain ATCC BAA-679 / EGD-e).